Reading from the N-terminus, the 291-residue chain is N-acetylmannosamine kinase (291 aa).

ATP is bound by residues 5-12 (AIDIGGTK) and 132-139 (GVGGGVVC). Zn(2+) is bound by residues histidine 156, cysteine 166, cysteine 168, and cysteine 173.

Belongs to the ROK (NagC/XylR) family. NanK subfamily. In terms of assembly, homodimer.

It carries out the reaction an N-acyl-D-mannosamine + ATP = an N-acyl-D-mannosamine 6-phosphate + ADP + H(+). It functions in the pathway amino-sugar metabolism; N-acetylneuraminate degradation; D-fructose 6-phosphate from N-acetylneuraminate: step 2/5. Functionally, catalyzes the phosphorylation of N-acetylmannosamine (ManNAc) to ManNAc-6-P. This Salmonella typhi protein is N-acetylmannosamine kinase.